Reading from the N-terminus, the 177-residue chain is Large ribosomal subunit protein uL6 (177 aa).

The span at 152–171 (RPPEPYKGKGVRYDDEEVRR) shows a compositional bias: basic and acidic residues. The segment at 152 to 177 (RPPEPYKGKGVRYDDEEVRRKEAKKK) is disordered.

It belongs to the universal ribosomal protein uL6 family. In terms of assembly, part of the 50S ribosomal subunit.

Functionally, this protein binds to the 23S rRNA, and is important in its secondary structure. It is located near the subunit interface in the base of the L7/L12 stalk, and near the tRNA binding site of the peptidyltransferase center. The sequence is that of Large ribosomal subunit protein uL6 from Shewanella oneidensis (strain ATCC 700550 / JCM 31522 / CIP 106686 / LMG 19005 / NCIMB 14063 / MR-1).